A 240-amino-acid chain; its full sequence is Probable septum site-determining protein MinC (240 aa).

This sequence belongs to the MinC family. Interacts with MinD and FtsZ.

Functionally, cell division inhibitor that blocks the formation of polar Z ring septums. Rapidly oscillates between the poles of the cell to destabilize FtsZ filaments that have formed before they mature into polar Z rings. Prevents FtsZ polymerization. In Chromobacterium violaceum (strain ATCC 12472 / DSM 30191 / JCM 1249 / CCUG 213 / NBRC 12614 / NCIMB 9131 / NCTC 9757 / MK), this protein is Probable septum site-determining protein MinC.